Reading from the N-terminus, the 106-residue chain is Iron-sulfur cluster assembly protein CyaY (106 aa).

It belongs to the frataxin family.

In terms of biological role, involved in iron-sulfur (Fe-S) cluster assembly. May act as a regulator of Fe-S biogenesis. This Salmonella newport (strain SL254) protein is Iron-sulfur cluster assembly protein CyaY.